Reading from the N-terminus, the 889-residue chain is Mitochondrial intermediate peptidase (889 aa).

The transit peptide at 1-30 directs the protein to the mitochondrion; the sequence is MASTSKNAQRAAASVAHSYHVCLARRMSRL. The disordered stretch occupies residues 60–112; the sequence is SSSLAAQRVQRPTSAGPILTNPISDHEKDNDELRSLFDAPPTSSSANHLRSSG. Residues 83 to 94 show a composition bias toward basic and acidic residues; the sequence is SDHEKDNDELRS. Polar residues predominate over residues 100-112; the sequence is PTSSSANHLRSSG. Position 670 (His-670) interacts with Zn(2+). Glu-671 is a catalytic residue. Zn(2+) contacts are provided by His-674 and His-677.

It belongs to the peptidase M3 family. Requires Zn(2+) as cofactor.

The protein localises to the mitochondrion matrix. It catalyses the reaction Release of an N-terminal octapeptide as second stage of processing of some proteins imported into the mitochondrion.. In terms of biological role, cleaves proteins, imported into the mitochondrion, to their mature size. While most mitochondrial precursor proteins are processed to the mature form in one step by mitochondrial processing peptidase (MPP), the sequential cleavage by MIP of an octapeptide after initial processing by MPP is a required step for a subgroup of nuclear-encoded precursor proteins destined for the matrix or the inner membrane. The polypeptide is Mitochondrial intermediate peptidase (OCT1) (Mycosarcoma maydis (Corn smut fungus)).